The following is a 540-amino-acid chain: MSASAAPPNKLPADFLWGFATASFQIEGATDVDGRGKSIWDDFSKIPGKTLDGKNGDVATDSYNRWREDVDLLVQYGVKSYRFSISWSRIIPLGGRNDPVNEAGIKFYSDLIDALLERGIVPFVTLYHWDLPQALHDRYLGWLNKDEIVQDYVRYAGVCFERFGDRVKHWLTMNEPWCISILGYGRGVFAPGRSSDRMRSPEGDSSTEPWIVGHSVILAHAYAVKLYREQFKANRGGQIGITLNGDWAMPYDDSPQNIEAAQHALDVAIGWFADPIYLGQYPAYMKEMLGDRLPEFTPEELAVVKGSSDFYGMNTYTTNLCKAGGEDEFQGNVEYTFTRPDGTQLGTAAHCSWLQDYAPGFRDLLNYLYKRYRKPIYVTENGFAVKDENSKPLEEALKDDDRVHYYQGVTDSLLAAVKEDGVDVRGYFGWSLLDNFEWADGYITRFGVTYVDYDTQKRYPKDSGKFLSQWFPAHIAESPKPAAETKKAATPSPLKPHGAISNGVSKKSSATKEPKSASRKKGRKAPFARFTAYISAFLGL.

Gln-25, His-128, and Asn-174 together coordinate substrate. The active-site Proton donor is Glu-175. Tyr-316 serves as a coordination point for substrate. Glu-380 functions as the Nucleophile in the catalytic mechanism. Substrate contacts are provided by residues Trp-430 and 437 to 438; that span reads EW. Low complexity predominate over residues 481-492; it reads PAAETKKAATPS. Positions 481–524 are disordered; that stretch reads PAAETKKAATPSPLKPHGAISNGVSKKSSATKEPKSASRKKGRK.

Belongs to the glycosyl hydrolase 1 family.

It catalyses the reaction Hydrolysis of terminal, non-reducing beta-D-glucosyl residues with release of beta-D-glucose.. In terms of biological role, plays an important role in cellulose degradation. Shows hydrolytic activity against several glycosidic compounds. This chain is Beta-glucosidase 1B, found in Phanerodontia chrysosporium (White-rot fungus).